The primary structure comprises 464 residues: Probable 1,4-beta-D-glucan cellobiohydrolase C (464 aa).

Positions 1–19 are cleaved as a signal peptide; sequence MKNFAPSLALSLLLPTVQA. In terms of domain architecture, CBM1 spans 20-55; sequence QQTMWGQCGGAGWSGATDCVAGGVCSTQNAYYAQCL. 2 disulfide bridges follow: Cys-27–Cys-44 and Cys-38–Cys-54. Positions 59 to 102 are thr-rich linker; the sequence is TTATTLSTTSKGTTTTTTSSTTSTGGGSSSTTTKTSTSAGPTVT. Residues 65 to 100 are compositionally biased toward low complexity; it reads STTSKGTTTTTTSSTTSTGGGSSSTTTKTSTSAGPT. The interval 65 to 108 is disordered; it reads STTSKGTTTTTTSSTTSTGGGSSSTTTKTSTSAGPTVTGSPSGN. Residues 103 to 464 form a catalytic region; the sequence is GSPSGNPFSG…QLLTNANPAF (362 aa). The active site involves Asp-194. Cystine bridges form between Cys-195–Cys-254 and Cys-386–Cys-433. Asp-240 acts as the Proton donor in catalysis. Asp-419 serves as the catalytic Nucleophile.

The protein belongs to the glycosyl hydrolase 6 (cellulase B) family.

It localises to the secreted. It catalyses the reaction Hydrolysis of (1-&gt;4)-beta-D-glucosidic linkages in cellulose and cellotetraose, releasing cellobiose from the non-reducing ends of the chains.. Its function is as follows. The biological conversion of cellulose to glucose generally requires three types of hydrolytic enzymes: (1) Endoglucanases which cut internal beta-1,4-glucosidic bonds; (2) Exocellobiohydrolases that cut the disaccharide cellobiose from the non-reducing end of the cellulose polymer chain; (3) Beta-1,4-glucosidases which hydrolyze the cellobiose and other short cello-oligosaccharides to glucose. This Aspergillus clavatus (strain ATCC 1007 / CBS 513.65 / DSM 816 / NCTC 3887 / NRRL 1 / QM 1276 / 107) protein is Probable 1,4-beta-D-glucan cellobiohydrolase C (cbhC).